Consider the following 411-residue polypeptide: 3-phosphoshikimate 1-carboxyvinyltransferase (411 aa).

3-phosphoshikimate contacts are provided by lysine 20, serine 21, and arginine 25. Lysine 20 lines the phosphoenolpyruvate pocket. The phosphoenolpyruvate site is built by glycine 86 and arginine 114. Residues serine 156, serine 157, glutamine 158, serine 181, aspartate 295, and lysine 322 each coordinate 3-phosphoshikimate. Glutamine 158 lines the phosphoenolpyruvate pocket. The active-site Proton acceptor is the aspartate 295. Phosphoenolpyruvate-binding residues include arginine 326, arginine 367, and lysine 393.

This sequence belongs to the EPSP synthase family. In terms of assembly, monomer.

The protein localises to the cytoplasm. The catalysed reaction is 3-phosphoshikimate + phosphoenolpyruvate = 5-O-(1-carboxyvinyl)-3-phosphoshikimate + phosphate. The protein operates within metabolic intermediate biosynthesis; chorismate biosynthesis. Functionally, catalyzes the transfer of the enolpyruvyl moiety of phosphoenolpyruvate (PEP) to the 5-hydroxyl of shikimate-3-phosphate (S3P) to produce enolpyruvyl shikimate-3-phosphate and inorganic phosphate. This is 3-phosphoshikimate 1-carboxyvinyltransferase from Picrophilus torridus (strain ATCC 700027 / DSM 9790 / JCM 10055 / NBRC 100828 / KAW 2/3).